The primary structure comprises 475 residues: Ribulose bisphosphate carboxylase large chain (475 aa).

The propeptide occupies 1 to 2; the sequence is MS. Pro-3 bears the N-acetylproline mark. Position 14 is an N6,N6,N6-trimethyllysine (Lys-14). The substrate site is built by Asn-123 and Thr-173. Residue Lys-175 is the Proton acceptor of the active site. Lys-177 provides a ligand contact to substrate. Mg(2+)-binding residues include Lys-201, Asp-203, and Glu-204. Lys-201 bears the N6-carboxylysine mark. The Proton acceptor role is filled by His-294. 3 residues coordinate substrate: Arg-295, His-327, and Ser-379.

This sequence belongs to the RuBisCO large chain family. Type I subfamily. In terms of assembly, heterohexadecamer of 8 large chains and 8 small chains; disulfide-linked. The disulfide link is formed within the large subunit homodimers. Mg(2+) is required as a cofactor. Post-translationally, the disulfide bond which can form in the large chain dimeric partners within the hexadecamer appears to be associated with oxidative stress and protein turnover.

The protein resides in the plastid. It is found in the chloroplast. It catalyses the reaction 2 (2R)-3-phosphoglycerate + 2 H(+) = D-ribulose 1,5-bisphosphate + CO2 + H2O. The enzyme catalyses D-ribulose 1,5-bisphosphate + O2 = 2-phosphoglycolate + (2R)-3-phosphoglycerate + 2 H(+). Functionally, ruBisCO catalyzes two reactions: the carboxylation of D-ribulose 1,5-bisphosphate, the primary event in carbon dioxide fixation, as well as the oxidative fragmentation of the pentose substrate in the photorespiration process. Both reactions occur simultaneously and in competition at the same active site. The protein is Ribulose bisphosphate carboxylase large chain of Pinus radiata (Monterey pine).